The primary structure comprises 309 residues: MPKPYVAINMAELKNEPKTFEMFASVGPKVCMVTARHPGFVGFQNHIQIGILPFGNRYGGAKMDMTKESSTVRVLQYTFWKDWKDHEEMHRQNWSYLFRLCYSCASQMIWGPWEPIYEIIYANMPINTEMTDFTAVVGKKFAEGKPLDIPVISQPYGKRVVAFAEHSVIPGKEKQFEDAIVRTLEMLKKAPGFLGAMVLKEIGVSGIGSMQFGAKGFHQVLENPGSLEPDPNNVMYSVPEAKNTPQQYIVHVEWANTDALMFGMGRVLLYPELRQVHDEVLDTLVYGPYIRILNPMMEGTFWREYLNEQ.

Cysteine persulfide is present on C31. Residues H86, H90, and E114 each contribute to the Fe cation site.

In terms of assembly, homoicosatetramer. The resulting structure is a hollow sphere where catalysis takes place in the inside cavity. Fe cation serves as cofactor.

The protein localises to the cytoplasm. It catalyses the reaction 4 sulfur + O2 + 4 H2O = 2 hydrogen sulfide + 2 sulfite + 6 H(+). Its activity is regulated as follows. Inhibited by zinc. Catalyzes the simultaneous oxidation and reduction of elemental sulfur in the presence of oxygen, with sulfite and hydrogen sulfide as products. The chain is Sulfur oxygenase/reductase (sor) from Acidianus ambivalens (Desulfurolobus ambivalens).